Here is a 470-residue protein sequence, read N- to C-terminus: Glutamate--tRNA ligase 2 (470 aa).

A 'HIGH' region motif is present at residues 10 to 20 (PSPTGFLHIGS). The 'KMSKS' region motif lies at 239–243 (KLSKR). Lys242 is an ATP binding site.

It belongs to the class-I aminoacyl-tRNA synthetase family. Glutamate--tRNA ligase type 1 subfamily. Monomer.

It is found in the cytoplasm. The enzyme catalyses tRNA(Glu) + L-glutamate + ATP = L-glutamyl-tRNA(Glu) + AMP + diphosphate. Catalyzes the attachment of glutamate to tRNA(Glu) in a two-step reaction: glutamate is first activated by ATP to form Glu-AMP and then transferred to the acceptor end of tRNA(Glu). This Rickettsia prowazekii (strain Madrid E) protein is Glutamate--tRNA ligase 2.